The chain runs to 425 residues: MAAAKPHMNLAVIGHIDHGKSTTVGRILFETGVVQQHILDGYKKEAESKGKATFEFAWVMDSLKEERERGITIDIAHKKFETPKYNFTVVDCPGHRDFVKNMITGASQADAAIIVVSGTEGPMEQTKEHVFLSKTLGINQIIVAINKMDAVNYSEEKYNEAKDKMTKLIMSVGFKPAETPFIPISAFCGDNIKEASANTPWYKGPTLLAALDLFKMPDMPTDKPLRLPIQDVYTISGVGTVPVGRVETGILKKGQKISFMPANVTGEVKSIEMHHEEFPEALPGDNVGFNVRGIAKNDVRRGDVCGPIENPPTVAEEFTAQVVVLQHPSVLSVGYTPVFHCHTSQTACMFTELNKKLDPRSGQVKEENPAFLKAGDAAICTITPTRPLVIETAKELPQLGRFAVRDMGMTVAAGLVLSVKAKQMR.

Residues 5–221 (KPHMNLAVIG…DLFKMPDMPT (217 aa)) form the tr-type G domain. The tract at residues 14-21 (GHIDHGKS) is G1. Residue 14–21 (GHIDHGKS) coordinates GTP. S21 is a Mg(2+) binding site. The G2 stretch occupies residues 70 to 74 (GITID). The interval 91 to 94 (DCPG) is G3. Residues 91-95 (DCPGH) and 146-149 (NKMD) contribute to the GTP site. A G4 region spans residues 146–149 (NKMD). Positions 185–187 (SAF) are G5.

It belongs to the TRAFAC class translation factor GTPase superfamily. Classic translation factor GTPase family. EF-Tu/EF-1A subfamily.

It localises to the cytoplasm. It catalyses the reaction GTP + H2O = GDP + phosphate + H(+). In terms of biological role, GTP hydrolase that promotes the GTP-dependent binding of aminoacyl-tRNA to the A-site of ribosomes during protein biosynthesis. The sequence is that of Elongation factor 1-alpha from Methanocorpusculum labreanum (strain ATCC 43576 / DSM 4855 / Z).